A 257-amino-acid polypeptide reads, in one-letter code: Type III pantothenate kinase (257 aa).

Residue 5–12 (DIGNTNIK) participates in ATP binding. Residue 107-110 (GSDR) coordinates substrate. D109 (proton acceptor) is an active-site residue. T133 is an ATP binding site.

It belongs to the type III pantothenate kinase family. As to quaternary structure, homodimer. It depends on NH4(+) as a cofactor. Requires K(+) as cofactor.

It localises to the cytoplasm. The enzyme catalyses (R)-pantothenate + ATP = (R)-4'-phosphopantothenate + ADP + H(+). The protein operates within cofactor biosynthesis; coenzyme A biosynthesis; CoA from (R)-pantothenate: step 1/5. Its function is as follows. Catalyzes the phosphorylation of pantothenate (Pan), the first step in CoA biosynthesis. This Ehrlichia ruminantium (strain Welgevonden) protein is Type III pantothenate kinase.